The primary structure comprises 150 residues: D-aminoacyl-tRNA deacylase (150 aa).

Positions 137-138 match the Gly-cisPro motif, important for rejection of L-amino acids motif; the sequence is GP.

Belongs to the DTD family. Homodimer.

It localises to the cytoplasm. It carries out the reaction glycyl-tRNA(Ala) + H2O = tRNA(Ala) + glycine + H(+). The catalysed reaction is a D-aminoacyl-tRNA + H2O = a tRNA + a D-alpha-amino acid + H(+). An aminoacyl-tRNA editing enzyme that deacylates mischarged D-aminoacyl-tRNAs. Also deacylates mischarged glycyl-tRNA(Ala), protecting cells against glycine mischarging by AlaRS. Acts via tRNA-based rather than protein-based catalysis; rejects L-amino acids rather than detecting D-amino acids in the active site. By recycling D-aminoacyl-tRNA to D-amino acids and free tRNA molecules, this enzyme counteracts the toxicity associated with the formation of D-aminoacyl-tRNA entities in vivo and helps enforce protein L-homochirality. This chain is D-aminoacyl-tRNA deacylase, found in Listeria innocua serovar 6a (strain ATCC BAA-680 / CLIP 11262).